The chain runs to 90 residues: MASFVSFLVLLLAALILMPQGLATYYKPIKKPPVYKPPVYKPPVYKPPVYKPKPPVYKPKPPVYKPPYKKPPYKKPPYGKYPPVEDNTHA.

An N-terminal signal peptide occupies residues 1–24; sequence MASFVSFLVLLLAALILMPQGLAT. Residues 46-65 are compositionally biased toward pro residues; sequence KPPVYKPKPPVYKPKPPVYK. A disordered region spans residues 46-90; that stretch reads KPPVYKPKPPVYKPKPPVYKPPYKKPPYKKPPYGKYPPVEDNTHA.

Belongs to the plant proline-rich protein superfamily. ENOD12 family.

Its subcellular location is the secreted. It localises to the cell wall. In Glycine max (Soybean), this protein is Repetitive proline-rich cell wall protein 3 (PRP3).